Consider the following 486-residue polypeptide: Glutamyl-tRNA(Gln) amidotransferase subunit A (486 aa).

Residues Lys-76 and Ser-151 each act as charge relay system in the active site. The Acyl-ester intermediate role is filled by Ser-175.

The protein belongs to the amidase family. GatA subfamily. Heterotrimer of A, B and C subunits.

The enzyme catalyses L-glutamyl-tRNA(Gln) + L-glutamine + ATP + H2O = L-glutaminyl-tRNA(Gln) + L-glutamate + ADP + phosphate + H(+). In terms of biological role, allows the formation of correctly charged Gln-tRNA(Gln) through the transamidation of misacylated Glu-tRNA(Gln) in organisms which lack glutaminyl-tRNA synthetase. The reaction takes place in the presence of glutamine and ATP through an activated gamma-phospho-Glu-tRNA(Gln). The sequence is that of Glutamyl-tRNA(Gln) amidotransferase subunit A from Chromohalobacter salexigens (strain ATCC BAA-138 / DSM 3043 / CIP 106854 / NCIMB 13768 / 1H11).